Here is a 340-residue protein sequence, read N- to C-terminus: Protein-arginine kinase (340 aa).

The Phosphagen kinase C-terminal domain maps to 21–242; that stretch reads VVLSSRIRLA…EQIIMQERIA (222 aa). ATP is bound by residues 24 to 28, His79, Arg113, 164 to 168, and 195 to 200; these read SSRIR, RASVM, and RGIYGE.

Belongs to the ATP:guanido phosphotransferase family.

The enzyme catalyses L-arginyl-[protein] + ATP = N(omega)-phospho-L-arginyl-[protein] + ADP + H(+). Functionally, catalyzes the specific phosphorylation of arginine residues in proteins. This chain is Protein-arginine kinase, found in Listeria monocytogenes serotype 4a (strain HCC23).